We begin with the raw amino-acid sequence, 157 residues long: SsrA-binding protein (157 aa).

The segment at 135–157 (KRDTIKDREGKREVERAMKTNHR) is disordered.

The protein belongs to the SmpB family.

The protein localises to the cytoplasm. Required for rescue of stalled ribosomes mediated by trans-translation. Binds to transfer-messenger RNA (tmRNA), required for stable association of tmRNA with ribosomes. tmRNA and SmpB together mimic tRNA shape, replacing the anticodon stem-loop with SmpB. tmRNA is encoded by the ssrA gene; the 2 termini fold to resemble tRNA(Ala) and it encodes a 'tag peptide', a short internal open reading frame. During trans-translation Ala-aminoacylated tmRNA acts like a tRNA, entering the A-site of stalled ribosomes, displacing the stalled mRNA. The ribosome then switches to translate the ORF on the tmRNA; the nascent peptide is terminated with the 'tag peptide' encoded by the tmRNA and targeted for degradation. The ribosome is freed to recommence translation, which seems to be the essential function of trans-translation. This chain is SsrA-binding protein, found in Albidiferax ferrireducens (strain ATCC BAA-621 / DSM 15236 / T118) (Rhodoferax ferrireducens).